The primary structure comprises 266 residues: MKAVVLTLAVLFLTGSQARHFWQQDEPQSPWDRVKDLATVYVDVVKDGGRDYVAQFEASALGKQLNLKLLDNWDSLSSTVAKLREQIGPVTQEFWDNLEKETEVLRQEMNKDLEEVKKKVQPYLDEFQSKWHEEVELYRQKVAPLGAELREGARQKLQELQEKLSPLGEELRDRARTHVDALRAQLAPYSEQLRERLAARLQALKEGGGAALTEYHAKASEHLSALREKAKPALEDLRQGLLPVLENFRDSLLAAVDEATKKLNSQ.

A signal peptide spans 1–18; the sequence is MKAVVLTLAVLFLTGSQA. 2 consecutive repeat copies span residues 67–88 and 89–110. A 10 X approximate tandem repeats region spans residues 67–266; that stretch reads LKLLDNWDSL…DEATKKLNSQ (200 aa). The residue at position 109 (M109) is a Methionine sulfoxide. The stretch at 111 to 121 is one 3; half-length repeat; the sequence is KDLEEVKKKVQ. 5 repeat units span residues 122–143, 144–165, 166–187, 188–209, and 210–231. The 9; half-length repeat unit spans residues 232–242; sequence PALEDLRQGLL. The stretch at 243 to 266 is repeat 10; that stretch reads PVLENFRDSLLAAVDEATKKLNSQ.

This sequence belongs to the apolipoprotein A1/A4/E family. Homodimer. Interacts with APOA1BP and CLU. Component of a sperm activating protein complex (SPAP), consisting of APOA1, an immunoglobulin heavy chain, an immunoglobulin light chain and albumin. Interacts with NDRG1. Interacts with SCGB3A2. Interacts with NAXE and YJEFN3. Post-translationally, glycosylated. In terms of processing, palmitoylated. Phosphorylation sites are present in the extracellular medium.

It localises to the secreted. Its function is as follows. Participates in the reverse transport of cholesterol from tissues to the liver for excretion by promoting cholesterol efflux from tissues and by acting as a cofactor for the lecithin cholesterol acyltransferase (LCAT). As part of the SPAP complex, activates spermatozoa motility. In Neomonachus schauinslandi (Hawaiian monk seal), this protein is Apolipoprotein A-I (APOA1).